A 175-amino-acid chain; its full sequence is NADH-ubiquinone oxidoreductase chain 6 (175 aa).

6 helical membrane-spanning segments follow: residues 1-21, 25-45, 47-67, 88-108, 115-137, and 149-169; these read MMTYVVFILSIVFVIGLIGSP, SPIYGGLGLIVSGGAGCGMVL, FGGSFLGLMVFLVYLGGMLVV, VVLGAFLLGLMMEFLAVLYVL, LVFKFSGLGDWVVYGMSDFGVFS, and YGVWLVVVTGWSLFVGVVVIM.

It belongs to the complex I subunit 6 family. In terms of assembly, core subunit of respiratory chain NADH dehydrogenase (Complex I) which is composed of 45 different subunits.

It localises to the mitochondrion inner membrane. The enzyme catalyses a ubiquinone + NADH + 5 H(+)(in) = a ubiquinol + NAD(+) + 4 H(+)(out). Core subunit of the mitochondrial membrane respiratory chain NADH dehydrogenase (Complex I) which catalyzes electron transfer from NADH through the respiratory chain, using ubiquinone as an electron acceptor. Essential for the catalytic activity and assembly of complex I. The polypeptide is NADH-ubiquinone oxidoreductase chain 6 (MT-ND6) (Hippopotamus amphibius (Hippopotamus)).